A 481-amino-acid polypeptide reads, in one-letter code: Protein NRT1/ PTR FAMILY 1.3 (481 aa).

12 helical membrane passes run 32 to 52 (LAYF…YGMG), 57 to 77 (ANIL…GAFI), 88 to 108 (IGFG…TTII), 124 to 144 (LLKS…AGGV), 173 to 193 (FNWY…LLVF), 202 to 222 (IGFG…FAAS), 259 to 279 (IWST…FIVL), 302 to 322 (IFLV…IVPL), 333 to 353 (LGVM…ISAL), 374 to 394 (AMWL…NTIA), 422 to 442 (ASLI…GSWI), and 451 to 471 (LDYY…YFVW).

This sequence belongs to the major facilitator superfamily. Proton-dependent oligopeptide transporter (POT/PTR) (TC 2.A.17) family. As to expression, expressed in roots.

It localises to the membrane. The sequence is that of Protein NRT1/ PTR FAMILY 1.3 (NPF1.3) from Arabidopsis thaliana (Mouse-ear cress).